Here is a 715-residue protein sequence, read N- to C-terminus: Polyribonucleotide nucleotidyltransferase (715 aa).

The Mg(2+) site is built by Asp500 and Asp506. The region spanning 567–634 is the KH domain; sequence PKVKMIRINP…AYIESLVREA (68 aa). The 76-residue stretch at 637–712 folds into the S1 motif domain; it reads GELYEAKVTR…ERGRVDLSRK (76 aa).

Belongs to the polyribonucleotide nucleotidyltransferase family. Mg(2+) serves as cofactor.

The protein localises to the cytoplasm. The enzyme catalyses RNA(n+1) + phosphate = RNA(n) + a ribonucleoside 5'-diphosphate. In terms of biological role, involved in mRNA degradation. Catalyzes the phosphorolysis of single-stranded polyribonucleotides processively in the 3'- to 5'-direction. This chain is Polyribonucleotide nucleotidyltransferase, found in Acholeplasma laidlawii (strain PG-8A).